The following is a 107-amino-acid chain: Putative ankyrin repeat protein RP714 (107 aa).

ANK repeat units lie at residues 7 to 36 (PPLSPLIIAVLNGNIEYTSELLQNGVDIDV), 40 to 69 (NGNSALHIAASKGYTKIATMLLLYGATIDA), and 73 to 102 (ELATPLHYAAANNYKDLTQYLLNMNANKSA).

This Rickettsia prowazekii (strain Madrid E) protein is Putative ankyrin repeat protein RP714.